Here is a 404-residue protein sequence, read N- to C-terminus: L-cysteine:1D-myo-inositol 2-amino-2-deoxy-alpha-D-glucopyranoside ligase 1 (404 aa).

Cys47 is a binding site for Zn(2+). Residues 47–50 (CGIT), Thr62, and 85–87 (NIT) contribute to the L-cysteinyl-5'-AMP site. Positions 49-59 (ITPYDSTHLGH) match the 'HIGH' region motif. The short motif at 188 to 193 (ERGGDP) is the 'ERGGDP' region element. Trp228 contacts L-cysteinyl-5'-AMP. Position 232 (Cys232) interacts with Zn(2+). 250-252 (GSD) provides a ligand contact to L-cysteinyl-5'-AMP. Zn(2+) is bound at residue His257. Ile284 contacts L-cysteinyl-5'-AMP. Residues 290–294 (KMSKS) carry the 'KMSKS' region motif.

The protein belongs to the class-I aminoacyl-tRNA synthetase family. MshC subfamily. Monomer. Zn(2+) is required as a cofactor.

The enzyme catalyses 1D-myo-inositol 2-amino-2-deoxy-alpha-D-glucopyranoside + L-cysteine + ATP = 1D-myo-inositol 2-(L-cysteinylamino)-2-deoxy-alpha-D-glucopyranoside + AMP + diphosphate + H(+). In terms of biological role, catalyzes the ATP-dependent condensation of GlcN-Ins and L-cysteine to form L-Cys-GlcN-Ins. The protein is L-cysteine:1D-myo-inositol 2-amino-2-deoxy-alpha-D-glucopyranoside ligase 1 of Corynebacterium jeikeium (strain K411).